The following is a 242-amino-acid chain: Type III pantothenate kinase (242 aa).

7-14 (DLGNSRFK) provides a ligand contact to ATP. Residues Tyr-91 and 98 to 101 (GVDR) contribute to the substrate site. Asp-100 acts as the Proton acceptor in catalysis. Thr-121 contacts ATP. Thr-171 is a binding site for substrate.

It belongs to the type III pantothenate kinase family. Homodimer. NH4(+) serves as cofactor. It depends on K(+) as a cofactor.

It localises to the cytoplasm. It catalyses the reaction (R)-pantothenate + ATP = (R)-4'-phosphopantothenate + ADP + H(+). It participates in cofactor biosynthesis; coenzyme A biosynthesis; CoA from (R)-pantothenate: step 1/5. Catalyzes the phosphorylation of pantothenate (Pan), the first step in CoA biosynthesis. In Xanthomonas campestris pv. campestris (strain 8004), this protein is Type III pantothenate kinase.